The chain runs to 355 residues: Peptide chain release factor 1 (355 aa).

At glutamine 233 the chain carries N5-methylglutamine. A compositionally biased stretch (basic and acidic residues) spans 282–293; the sequence is RKKEQARADSRR. The segment at 282–305 is disordered; sequence RKKEQARADSRRGQVGSGDRSERI.

It belongs to the prokaryotic/mitochondrial release factor family. In terms of processing, methylated by PrmC. Methylation increases the termination efficiency of RF1.

It is found in the cytoplasm. Functionally, peptide chain release factor 1 directs the termination of translation in response to the peptide chain termination codons UAG and UAA. In Rickettsia rickettsii (strain Iowa), this protein is Peptide chain release factor 1.